Consider the following 88-residue polypeptide: Protein ORGAN SIZE RELATED 1 (88 aa).

The interval 25 to 76 (ITARSVALLLFLSLLLLILPPFLPPLPPPPATLLLLPLLLMILLIFLAFSPS) is organ Size Related (OSR) domain. 2 helical membrane passes run 30-50 (VALL…LPPL) and 53-73 (PPAT…FLAF).

This sequence belongs to the plant organ size related (OSR) protein family. Mostly expressed in flowers, and, to a lower extent, in leaves and cotyledons.

The protein resides in the membrane. It localises to the endoplasmic reticulum. It is found in the nucleus. Its subcellular location is the cytoplasm. Its function is as follows. Together with ARGOS and ARL, regulates organ growth and final organ size. Promotes both cell expansion and proliferation-dependent organ growth, in an ANT-dependent manner. The protein is Protein ORGAN SIZE RELATED 1 of Arabidopsis thaliana (Mouse-ear cress).